A 970-amino-acid chain; its full sequence is Isoleucine--tRNA ligase (970 aa).

Residues 65-75 (PYANGHLHIGH) carry the 'HIGH' region motif. Residue Glu608 participates in L-isoleucyl-5'-AMP binding. Positions 649–653 (KMSKS) match the 'KMSKS' region motif. Lys652 contributes to the ATP binding site. 4 residues coordinate Zn(2+): Cys943, Cys946, Cys962, and Cys965.

It belongs to the class-I aminoacyl-tRNA synthetase family. IleS type 1 subfamily. Monomer. Zn(2+) is required as a cofactor.

Its subcellular location is the cytoplasm. The enzyme catalyses tRNA(Ile) + L-isoleucine + ATP = L-isoleucyl-tRNA(Ile) + AMP + diphosphate. In terms of biological role, catalyzes the attachment of isoleucine to tRNA(Ile). As IleRS can inadvertently accommodate and process structurally similar amino acids such as valine, to avoid such errors it has two additional distinct tRNA(Ile)-dependent editing activities. One activity is designated as 'pretransfer' editing and involves the hydrolysis of activated Val-AMP. The other activity is designated 'posttransfer' editing and involves deacylation of mischarged Val-tRNA(Ile). In Ruegeria pomeroyi (strain ATCC 700808 / DSM 15171 / DSS-3) (Silicibacter pomeroyi), this protein is Isoleucine--tRNA ligase.